A 452-amino-acid chain; its full sequence is Phosphoglucosamine mutase (452 aa).

The active-site Phosphoserine intermediate is the S112. The Mg(2+) site is built by S112, D251, D253, and D255. The residue at position 112 (S112) is a Phosphoserine.

This sequence belongs to the phosphohexose mutase family. Requires Mg(2+) as cofactor. In terms of processing, activated by phosphorylation.

It carries out the reaction alpha-D-glucosamine 1-phosphate = D-glucosamine 6-phosphate. Its function is as follows. Catalyzes the conversion of glucosamine-6-phosphate to glucosamine-1-phosphate. The sequence is that of Phosphoglucosamine mutase from Bordetella pertussis (strain Tohama I / ATCC BAA-589 / NCTC 13251).